The primary structure comprises 319 residues: Taste receptor type 2 member 39 (319 aa).

Residues 1 to 16 (MAQPSNYWKQDVLPLS) are Extracellular-facing. A helical membrane pass occupies residues 17–37 (ILMLTLVATECTIGIIASGIV). Topologically, residues 38-65 (MAVNAVSWVQKKAISITTRILLLLSVSR) are cytoplasmic. The helical transmembrane segment at 66–86 (IGLQSIMLIEITSSIFNVAFY) threads the bilayer. At 87–97 (NSVLYRVSNVS) the chain is on the extracellular side. Residue Asn-95 is glycosylated (N-linked (GlcNAc...) asparagine). The helical transmembrane segment at 98 to 118 (FVFLNYCSLWFAALLSFFHFV) threads the bilayer. Topologically, residues 119-137 (KIANFSYPLFFKLKWRISE) are cytoplasmic. Residues 138 to 158 (LMPWLLWLSVFISFSSSMFFS) traverse the membrane as a helical segment. Residues 159–194 (KHKFTVNNNNSLSNNICNFTMKLYVVETNVVNVSFL) lie on the Extracellular side of the membrane. N-linked (GlcNAc...) asparagine glycosylation is found at Asn-167, Asn-176, and Asn-190. The chain crosses the membrane as a helical span at residues 195 to 215 (FISGILPPLTMFVATATLLIF). Residues 216–247 (SLRRHTLNMRNSATGSRNPCIEAHMQAIKETS) are Cytoplasmic-facing. Residues 248–268 (CFLFLYILNAAALLLSTSNIV) form a helical membrane-spanning segment. Topologically, residues 269-273 (DASLF) are extracellular. The helical transmembrane segment at 274 to 294 (WSIVIRIVLPVYPAGHSVLLI) threads the bilayer. Over 295–319 (QNNPGLRRTWKHLQSQIHLYLQNRF) the chain is Cytoplasmic.

It belongs to the G-protein coupled receptor T2R family.

The protein localises to the membrane. Putative taste receptor which may play a role in the perception of bitterness. The sequence is that of Taste receptor type 2 member 39 (Tas2r39) from Mus musculus (Mouse).